The chain runs to 287 residues: Bifunctional protein FolD (287 aa).

NADP(+) contacts are provided by residues 166 to 168 (GAS) and Ile-232.

It belongs to the tetrahydrofolate dehydrogenase/cyclohydrolase family. In terms of assembly, homodimer.

It carries out the reaction (6R)-5,10-methylene-5,6,7,8-tetrahydrofolate + NADP(+) = (6R)-5,10-methenyltetrahydrofolate + NADPH. It catalyses the reaction (6R)-5,10-methenyltetrahydrofolate + H2O = (6R)-10-formyltetrahydrofolate + H(+). It functions in the pathway one-carbon metabolism; tetrahydrofolate interconversion. Catalyzes the oxidation of 5,10-methylenetetrahydrofolate to 5,10-methenyltetrahydrofolate and then the hydrolysis of 5,10-methenyltetrahydrofolate to 10-formyltetrahydrofolate. The polypeptide is Bifunctional protein FolD (Pectobacterium carotovorum subsp. carotovorum (strain PC1)).